Here is a 176-residue protein sequence, read N- to C-terminus: Cathelicidin-2 (176 aa).

An N-terminal signal peptide occupies residues 1–29; it reads METQRASLSLGRCSLWLLLLGLVLPSASA. Pyrrolidone carboxylic acid is present on Q30. The propeptide occupies 30–130; the sequence is QALSYREAVL…DINCNELQSV (101 aa). Intrachain disulfides connect C85-C96 and C107-C124. The disordered stretch occupies residues 157-176; the sequence is IFPPIRPPFRPPLGPFPGRR. P173 carries the proline amide modification. A propeptide spans 174–176 (removed in mature form); sequence GRR.

This sequence belongs to the cathelicidin family. In terms of processing, elastase is responsible for its maturation. In terms of tissue distribution, large granules of neutrophils.

It is found in the secreted. In terms of biological role, exerts, in vitro, a potent antimicrobial activity. Probably due to an impairment of the function of the respiratory chain and of energy-dependent activities in the inner membrane of susceptible microorganisms. This Bos taurus (Bovine) protein is Cathelicidin-2 (CATHL2).